The sequence spans 414 residues: MSYYDIIFSKHIDKIKSEGRYREFKALKRQADNFPFAEHANKQIVMWCINDYLGMSKHAKVMHASIDALLKYGVGSGGTRNIGGNNIAILELEKELANLHKKQAALVFTSGFVANDTTLASLAKIMPDIVFFSDELNHASIIAGITSSRAEKYIYRHLDVKHLEELLQSVDINRPKIVVFESAYSMDGFFSPIKDIINLAKKYNALTFIDEVHTVGLYGKQGGGIAELLNCSDQIDIIQGTLAKAYGTIGGYITSNHNLVDAIRLTAPGFIFTTSLPPVISTAATHSIRHLKESNEERIKHQEVVTKLKNSFERFNIPYLKNESHIVPIIIGDPIKTAKASNMLLNEYGIYVQHINFPTVPRGTERLRIIPTPAHTDKMINDLSVALVQIFAELDIELSSAKELNEEVRLNLIA.

Residues Arg-22, Ser-133, and Lys-152 each coordinate substrate. Residues Ser-185, His-213, and Thr-241 each contribute to the pyridoxal 5'-phosphate site. The active site involves Lys-244. N6-(pyridoxal phosphate)lysine is present on Lys-244. 2 residues coordinate pyridoxal 5'-phosphate: Thr-273 and Thr-274. Thr-359 is a binding site for substrate.

Belongs to the class-II pyridoxal-phosphate-dependent aminotransferase family. In terms of assembly, homodimer. Pyridoxal 5'-phosphate is required as a cofactor.

The catalysed reaction is succinyl-CoA + glycine + H(+) = 5-aminolevulinate + CO2 + CoA. The protein operates within porphyrin-containing compound metabolism; protoporphyrin-IX biosynthesis; 5-aminolevulinate from glycine: step 1/1. The polypeptide is 5-aminolevulinate synthase (hemA) (Rickettsia conorii (strain ATCC VR-613 / Malish 7)).